Here is a 166-residue protein sequence, read N- to C-terminus: 6,7-dimethyl-8-ribityllumazine synthase (166 aa).

5-amino-6-(D-ribitylamino)uracil is bound by residues Phe24, 58–60, and 82–84; these read ALE and AVV. 87-88 is a binding site for (2S)-2-hydroxy-3-oxobutyl phosphate; it reads ET. His90 serves as the catalytic Proton donor. Asn115 provides a ligand contact to 5-amino-6-(D-ribitylamino)uracil. Arg129 contributes to the (2S)-2-hydroxy-3-oxobutyl phosphate binding site.

The protein belongs to the DMRL synthase family.

The enzyme catalyses (2S)-2-hydroxy-3-oxobutyl phosphate + 5-amino-6-(D-ribitylamino)uracil = 6,7-dimethyl-8-(1-D-ribityl)lumazine + phosphate + 2 H2O + H(+). It participates in cofactor biosynthesis; riboflavin biosynthesis; riboflavin from 2-hydroxy-3-oxobutyl phosphate and 5-amino-6-(D-ribitylamino)uracil: step 1/2. Catalyzes the formation of 6,7-dimethyl-8-ribityllumazine by condensation of 5-amino-6-(D-ribitylamino)uracil with 3,4-dihydroxy-2-butanone 4-phosphate. This is the penultimate step in the biosynthesis of riboflavin. This chain is 6,7-dimethyl-8-ribityllumazine synthase, found in Cupriavidus necator (strain ATCC 17699 / DSM 428 / KCTC 22496 / NCIMB 10442 / H16 / Stanier 337) (Ralstonia eutropha).